Consider the following 158-residue polypeptide: Lipoprotein signal peptidase (158 aa).

4 helical membrane passes run 7-27 (LFWIAAFIAFFVDQLTKYWVV), 38-58 (ILPGIFHFTYVTNTGAAFSLF), 67-87 (WLSLGVSLLLIGLALLGPVLD), and 95-115 (GLILGGAMGNGIDRFALGYVV). Active-site residues include aspartate 116 and aspartate 132. The helical transmembrane segment at 125 to 145 (FAVFNMADSFISIGIVCLLLA) threads the bilayer.

Belongs to the peptidase A8 family.

Its subcellular location is the cell inner membrane. It catalyses the reaction Release of signal peptides from bacterial membrane prolipoproteins. Hydrolyzes -Xaa-Yaa-Zaa-|-(S,diacylglyceryl)Cys-, in which Xaa is hydrophobic (preferably Leu), and Yaa (Ala or Ser) and Zaa (Gly or Ala) have small, neutral side chains.. The protein operates within protein modification; lipoprotein biosynthesis (signal peptide cleavage). Functionally, this protein specifically catalyzes the removal of signal peptides from prolipoproteins. In Nostoc sp. (strain PCC 7120 / SAG 25.82 / UTEX 2576), this protein is Lipoprotein signal peptidase.